A 277-amino-acid chain; its full sequence is Large ribosomal subunit protein uL2 (277 aa).

2 disordered regions span residues 32–58 (KSLT…RGGG) and 225–277 (VAMN…RRNN).

The protein belongs to the universal ribosomal protein uL2 family. As to quaternary structure, part of the 50S ribosomal subunit. Forms a bridge to the 30S subunit in the 70S ribosome.

In terms of biological role, one of the primary rRNA binding proteins. Required for association of the 30S and 50S subunits to form the 70S ribosome, for tRNA binding and peptide bond formation. It has been suggested to have peptidyltransferase activity; this is somewhat controversial. Makes several contacts with the 16S rRNA in the 70S ribosome. This is Large ribosomal subunit protein uL2 from Borrelia recurrentis (strain A1).